The chain runs to 807 residues: Glycerol-3-phosphate acyltransferase (807 aa).

The HXXXXD motif signature appears at 308 to 313 (CHRSHM).

The protein belongs to the GPAT/DAPAT family.

It is found in the cell inner membrane. It catalyses the reaction sn-glycerol 3-phosphate + an acyl-CoA = a 1-acyl-sn-glycero-3-phosphate + CoA. It participates in phospholipid metabolism; CDP-diacylglycerol biosynthesis; CDP-diacylglycerol from sn-glycerol 3-phosphate: step 1/3. The chain is Glycerol-3-phosphate acyltransferase from Shewanella sp. (strain W3-18-1).